We begin with the raw amino-acid sequence, 174 residues long: UPF0316 protein LMHCC_0787 (174 aa).

3 helical membrane passes run 4-24, 36-56, and 62-82; these read GIFI…IYTV, LAAL…SLVL, and IANV…GMKI.

It belongs to the UPF0316 family.

Its subcellular location is the cell membrane. In Listeria monocytogenes serotype 4a (strain HCC23), this protein is UPF0316 protein LMHCC_0787.